The sequence spans 252 residues: Probable transcriptional regulator SauR (252 aa).

Positions 6–68 (NAAAVRAFRI…AGNRHYECSS (63 aa)) constitute an HTH iclR-type domain. The H-T-H motif DNA-binding region spans 28–47 (LAAIVQAIELPKQTVHRILK). The IclR-ED domain maps to 83-252 (PAAARHAILQ…ADEMVKTFCE (170 aa)).

In terms of biological role, may regulate transcription of the sauSTU operon. This is Probable transcriptional regulator SauR (sauR) from Cupriavidus necator (strain ATCC 17699 / DSM 428 / KCTC 22496 / NCIMB 10442 / H16 / Stanier 337) (Ralstonia eutropha).